A 67-amino-acid polypeptide reads, in one-letter code: DNA-directed RNA polymerase subunit omega (67 aa).

It belongs to the RNA polymerase subunit omega family. The RNAP catalytic core consists of 2 alpha, 1 beta, 1 beta' and 1 omega subunit. When a sigma factor is associated with the core the holoenzyme is formed, which can initiate transcription.

It catalyses the reaction RNA(n) + a ribonucleoside 5'-triphosphate = RNA(n+1) + diphosphate. Functionally, promotes RNA polymerase assembly. Latches the N- and C-terminal regions of the beta' subunit thereby facilitating its interaction with the beta and alpha subunits. This is DNA-directed RNA polymerase subunit omega from Albidiferax ferrireducens (strain ATCC BAA-621 / DSM 15236 / T118) (Rhodoferax ferrireducens).